The sequence spans 164 residues: Putative protein ZNF321 (164 aa).

The chain is Putative protein ZNF321 (ZNF321P) from Homo sapiens (Human).